A 92-amino-acid chain; its full sequence is C-C motif chemokine 3 (92 aa).

The N-terminal stretch at 1–23 (MQVSTAALAVLLCTMALCNQFSA) is a signal peptide. 2 disulfide bridges follow: Cys-33–Cys-57 and Cys-34–Cys-73.

This sequence belongs to the intercrine beta (chemokine CC) family. Self-associates. Also heterodimer of MIP-1-alpha(4-69) and MIP-1-beta(3-69). Interacts with CCR1.

The protein resides in the secreted. Its function is as follows. Monokine with inflammatory and chemokinetic properties. Binds to CCR1, CCR4 and CCR5. One of the major HIV-suppressive factors produced by CD8+ T-cells. Recombinant MIP-1-alpha induces a dose-dependent inhibition of different strains of HIV-1, HIV-2, and simian immunodeficiency virus (SIV). This chain is C-C motif chemokine 3 (CCL3), found in Pan troglodytes (Chimpanzee).